The following is a 593-amino-acid chain: ETS-related transcription factor Elf-2 (593 aa).

A Phosphoserine modification is found at S107. The tract at residues 146-201 is disordered; sequence VEVSTEESEPMDTSPIPTSPDSHEPMKKKKVGRKPKTQQSPISNGSPELGIKKKPR. Positions 171 to 181 are enriched in basic residues; that stretch reads MKKKKVGRKPK. Position 182 is a phosphothreonine (T182). The span at 182-191 shows a compositional bias: polar residues; it reads TQQSPISNGS. S185 and S191 each carry phosphoserine. The ETS DNA-binding region spans 208-290; sequence TYLWEFLLDL…EGQRLVYQFK (83 aa). 2 positions are modified to phosphoserine: S363 and S372. T376 is modified (phosphothreonine). S430 bears the Phosphoserine mark. R494 is modified (omega-N-methylarginine). T521 carries the post-translational modification Phosphothreonine. A Glycyl lysine isopeptide (Lys-Gly) (interchain with G-Cter in SUMO2) cross-link involves residue K536.

Belongs to the ETS family. In terms of assembly, interacts with the LIM domains of LMO2. Interacts via its N-terminal region with RUNX1. In terms of tissue distribution, expressed in all fetal and adult tissues examined. Among fetal tissues, highest levels of expression detected in heart, lung, liver and kidney, and lower levels in brain. Among adult tissues, highest levels of expression detected in heart, placenta, lung, skeletal muscle, spleen, thymus, testis and ovary. Moderate expression in prostate, small intestine, kidney, liver and pancreas, and weak expression in colon, brain and peripheral blood lymphocytes.

It is found in the nucleus. In terms of biological role, isoform 1 transcriptionally activates the LYN and BLK promoters and acts synergistically with RUNX1 to transactivate the BLK promoter. Isoform 2 may function in repression of RUNX1-mediated transactivation. The polypeptide is ETS-related transcription factor Elf-2 (Homo sapiens (Human)).